A 58-amino-acid polypeptide reads, in one-letter code: Large ribosomal subunit protein uL30 (58 aa).

The protein belongs to the universal ribosomal protein uL30 family. Part of the 50S ribosomal subunit.

This is Large ribosomal subunit protein uL30 from Pseudomonas fluorescens (strain ATCC BAA-477 / NRRL B-23932 / Pf-5).